We begin with the raw amino-acid sequence, 322 residues long: GTP 3',8-cyclase (322 aa).

Residues 4–229 enclose the Radical SAM core domain; that stretch reads NFNRNIDYLR…IPVQMKKSGP (226 aa). Arg-13 is a binding site for GTP. Cys-20 and Cys-24 together coordinate [4Fe-4S] cluster. An S-adenosyl-L-methionine-binding site is contributed by Tyr-26. Residue Cys-27 participates in [4Fe-4S] cluster binding. Arg-64 is a GTP binding site. Residue Gly-68 participates in S-adenosyl-L-methionine binding. Thr-95 serves as a coordination point for GTP. Ser-119 provides a ligand contact to S-adenosyl-L-methionine. Residue Lys-156 participates in GTP binding. Residue Met-190 participates in S-adenosyl-L-methionine binding. 2 residues coordinate [4Fe-4S] cluster: Cys-253 and Cys-256. 258 to 260 provides a ligand contact to GTP; sequence RLR. Cys-270 lines the [4Fe-4S] cluster pocket.

The protein belongs to the radical SAM superfamily. MoaA family. Monomer and homodimer. It depends on [4Fe-4S] cluster as a cofactor.

It carries out the reaction GTP + AH2 + S-adenosyl-L-methionine = (8S)-3',8-cyclo-7,8-dihydroguanosine 5'-triphosphate + 5'-deoxyadenosine + L-methionine + A + H(+). The protein operates within cofactor biosynthesis; molybdopterin biosynthesis. Catalyzes the cyclization of GTP to (8S)-3',8-cyclo-7,8-dihydroguanosine 5'-triphosphate. This is GTP 3',8-cyclase from Thermodesulfovibrio yellowstonii (strain ATCC 51303 / DSM 11347 / YP87).